Consider the following 506-residue polypeptide: MSLLLEAERYVANQSSNRMLNAFITPLCRHSGRWHDQAKDADIRGKQGKLRSRLDGRFIAFKDNICTRDFPTTCASKSLDTFTSPFNATVVQQLEDAGAIVAGKTNLDEFGMGSHSIYSSFGHVMNTRRGDDSKFLSAGGSSGGNAVAVATDQCYAALGTDTGGSIRLPAAYTGTVGFKPSYGLLSRWGVIAYANSLDTVGILAKRVSVARDVFDVLNKHDPRDPTSISPSSRSRISSKLNLPQLTSRLTSRPLRIGIPLEYNISELAPSVRQAWCHSLEYLRQQGHTIQPVSLPMTKLALSAYYVLAPAEASSNLAKYDGVRYGTRSDDSTENQSETYLYAKTRGAGFGPEVKRRIMLGAFSLSAQAIDNYFIQAQRIRRLVRHDFDAAFQAEHPLAAEIRNVELRQQAKQTGIDVLISPTAPTPPPTISDITDTSTKRSNLDAYINDVFTVPASLAGLPAISVPVSGKDNAGNQEGDILAGIQVIGQYGDDELVLKVGELLERR.

Residues lysine 62 and serine 141 each act as charge relay system in the active site. Residue serine 165 is the Acyl-ester intermediate of the active site.

This sequence belongs to the amidase family. GatA subfamily. Subunit of the heterotrimeric GatCAB amidotransferase (AdT) complex, composed of A, B and C subunits.

The protein resides in the mitochondrion. The catalysed reaction is L-glutamyl-tRNA(Gln) + L-glutamine + ATP + H2O = L-glutaminyl-tRNA(Gln) + L-glutamate + ADP + phosphate + H(+). In terms of biological role, allows the formation of correctly charged Gln-tRNA(Gln) through the transamidation of misacylated Glu-tRNA(Gln) in the mitochondria. The reaction takes place in the presence of glutamine and ATP through an activated gamma-phospho-Glu-tRNA(Gln). The polypeptide is Glutamyl-tRNA(Gln) amidotransferase subunit A, mitochondrial (Emericella nidulans (strain FGSC A4 / ATCC 38163 / CBS 112.46 / NRRL 194 / M139) (Aspergillus nidulans)).